We begin with the raw amino-acid sequence, 285 residues long: PHO85 cyclin-7 (285 aa).

Residues 1–14 (MELSSPSKKTTTSP) show a composition bias toward low complexity. The segment at 1-42 (MELSSPSKKTTTSPINIPGGNRDNLIIGPHSHSFKTDPFSSN) is disordered. Ser-69 carries the phosphoserine modification.

Belongs to the cyclin family. PHO80 subfamily. In terms of assembly, forms a cyclin-CDK complex with PHO85. Interacts with the substrate proteins MMR1 and YJL084C. Interacts with the CDK inhibitor (CKI) PHO81.

The protein localises to the cytoplasm. Its activity is regulated as follows. The PCL7-PHO85 cyclin-CDK is inhibited by PHO81 in low-phosphate conditions. Its function is as follows. Cyclin partner of the cyclin-dependent kinase (CDK) PHO85. Together with cyclin PCL6, controls glycogen phosphorylase and glycogen synthase activities in response to nutrient availablility. The PCL7-PHO85 cyclin-CDK holoenzyme has GLC8 kinase activity and phosphorylates and inactivates the phosphatase PP1-2 inhibitor GLC8, causing activation of PP1-2, which then dephosphorylates and activates glycogen phosphorylase. PCL7-PHO85 also phosphorylates MMR1 and YJL084C. This chain is PHO85 cyclin-7 (PCL7), found in Saccharomyces cerevisiae (strain ATCC 204508 / S288c) (Baker's yeast).